We begin with the raw amino-acid sequence, 958 residues long: DNA repair and recombination protein RDH54 (958 aa).

The tract at residues 189 to 217 is disordered; it reads EALSQNMGNPSPPTTSTTETVPSTKNDGG. The segment covering 202 to 212 has biased composition (low complexity); the sequence is TTSTTETVPST. The Helicase ATP-binding domain maps to 333–521; it reads LENDSDISGC…FTIIDFINPG (189 aa). 380 to 387 serves as a coordination point for ATP; sequence IPLTGLCK. The short motif at 506–509 is the DEGH box element; the sequence is NDLN. Residue Lys-649 forms a Glycyl lysine isopeptide (Lys-Gly) (interchain with G-Cter in ubiquitin) linkage. The Helicase C-terminal domain maps to 665 to 824; it reads KLKVLMTLLE…DSEMRNKESS (160 aa).

It belongs to the SNF2/RAD54 helicase family. In terms of assembly, interacts with RAD51 and DMC1.

The protein localises to the nucleus. It carries out the reaction ATP + H2O = ADP + phosphate + H(+). Functionally, involved in the recombinational repair of double-strand breaks (DSB) in DNA during mitosis and meiosis. Has DNA dependent ATPase activity. Promotes D-loop (displacement loop) formation with RAD51 recombinase. Modifies the topology of double-stranded DNA during the D-loop reaction to facilitate the invasion of the homologous duplex molecule by the initiating single-stranded DNA substrate. Required for adaptation from G2/M checkpoint arrest induced by a double strand break, by participating in monitoring the extent of single-stranded DNA produced by resection of DNA ends. This role is distinct from its roles in recombination. Promotes colocalization of RAD51 and DMC1 during meiotic recombination. Involved in crossover interference. The polypeptide is DNA repair and recombination protein RDH54 (RDH54) (Saccharomyces cerevisiae (strain ATCC 204508 / S288c) (Baker's yeast)).